Consider the following 117-residue polypeptide: uncharacterized protein (117 aa).

The protein resides in the mitochondrion. This is an uncharacterized protein from Arabidopsis thaliana (Mouse-ear cress).